The primary structure comprises 270 residues: tRNA 2-(methylsulfanyl)-N(6)-isopentenyladenosine(37) hydroxylase (270 aa).

Fe cation is bound by residues Glu59, Glu137, His140, Glu190, Glu219, and His222.

The protein belongs to the MiaE family. Monomer. The cofactor is Fe cation.

The enzyme catalyses 2-methylsulfanyl-N(6)-dimethylallyladenosine(37) in tRNA + AH2 + O2 = N(6)-[(2E)-4-hydroxy-3-methylbut-2-en-1-yl]-2-(methylsulfanyl)adenosine(37) in tRNA + A + H2O. Its pathway is tRNA modification; 2-methylthio-N-6-(cis-hydroxy)isopentenyl adenosine-tRNA biosynthesis. Functionally, involved in specific tRNA modification. Catalyzes the oxygen-dependent hydroxylation of 2-methylthio-N-6-isopentenyl adenosine (ms2i6A) to produce 2-methylthio-N-6-(cis-hydroxy)isopentenyl adenosine (ms2io6A) at position 37 in tRNAs. Can also use N6-(dimethylallyl)adenosine (i6A) as substrate, with lower efficiency. The presence of the hydroxyl group on the tRNA may regulate the ability of S.typhimurium to grow on the citric acid cycle (CAC) intermediates succinate, fumarate and malate. This is tRNA 2-(methylsulfanyl)-N(6)-isopentenyladenosine(37) hydroxylase from Salmonella typhimurium (strain LT2 / SGSC1412 / ATCC 700720).